Here is a 428-residue protein sequence, read N- to C-terminus: Trigger factor (428 aa).

A PPIase FKBP-type domain is found at K163–P248.

This sequence belongs to the FKBP-type PPIase family. Tig subfamily.

The protein resides in the cytoplasm. The catalysed reaction is [protein]-peptidylproline (omega=180) = [protein]-peptidylproline (omega=0). In terms of biological role, involved in protein export. Acts as a chaperone by maintaining the newly synthesized protein in an open conformation. Functions as a peptidyl-prolyl cis-trans isomerase. This chain is Trigger factor, found in Lachnoclostridium phytofermentans (strain ATCC 700394 / DSM 18823 / ISDg) (Clostridium phytofermentans).